The chain runs to 483 residues: Glutamate--tRNA ligase (483 aa).

Positions 11–21 (PSPTGHLHIGN) match the 'HIGH' region motif. Cys-108, Cys-110, His-135, and Asp-137 together coordinate Zn(2+). Positions 252–256 (KLSKR) match the 'KMSKS' region motif. An ATP-binding site is contributed by Lys-255.

The protein belongs to the class-I aminoacyl-tRNA synthetase family. Glutamate--tRNA ligase type 1 subfamily. As to quaternary structure, monomer. Requires Zn(2+) as cofactor.

It localises to the cytoplasm. The enzyme catalyses tRNA(Glu) + L-glutamate + ATP = L-glutamyl-tRNA(Glu) + AMP + diphosphate. Its function is as follows. Catalyzes the attachment of glutamate to tRNA(Glu) in a two-step reaction: glutamate is first activated by ATP to form Glu-AMP and then transferred to the acceptor end of tRNA(Glu). The protein is Glutamate--tRNA ligase of Bacillus subtilis (strain 168).